The following is a 105-amino-acid chain: Insulin-like peptide 7 (105 aa).

The N-terminal stretch at 1–18 is a signal peptide; that stretch reads MPPIILVFFLVLIPASQQ. The propeptide occupies 19 to 57; sequence YPFSLESLNDQIINEEVIEYMLENSIRSSRTRRVPDEKK. Intrachain disulfides connect C61–C90, C73–C103, C77–C104, and C89–C94.

Belongs to the insulin family.

The protein localises to the secreted. In terms of biological role, insulin-like peptide which plays a role in ageing as a consequence of daf-16 activity. This chain is Insulin-like peptide 7, found in Caenorhabditis elegans.